The primary structure comprises 280 residues: Putative pyruvate, phosphate dikinase regulatory protein (280 aa).

Residue 147–154 (GASRSSKT) coordinates ADP.

Belongs to the pyruvate, phosphate/water dikinase regulatory protein family. PDRP subfamily.

The enzyme catalyses N(tele)-phospho-L-histidyl/L-threonyl-[pyruvate, phosphate dikinase] + ADP = N(tele)-phospho-L-histidyl/O-phospho-L-threonyl-[pyruvate, phosphate dikinase] + AMP + H(+). The catalysed reaction is N(tele)-phospho-L-histidyl/O-phospho-L-threonyl-[pyruvate, phosphate dikinase] + phosphate + H(+) = N(tele)-phospho-L-histidyl/L-threonyl-[pyruvate, phosphate dikinase] + diphosphate. In terms of biological role, bifunctional serine/threonine kinase and phosphorylase involved in the regulation of the pyruvate, phosphate dikinase (PPDK) by catalyzing its phosphorylation/dephosphorylation. The sequence is that of Putative pyruvate, phosphate dikinase regulatory protein from Pelobacter propionicus (strain DSM 2379 / NBRC 103807 / OttBd1).